A 132-amino-acid chain; its full sequence is Small ribosomal subunit protein uS8 (132 aa).

It belongs to the universal ribosomal protein uS8 family. Part of the 30S ribosomal subunit. Contacts proteins S5 and S12.

Its function is as follows. One of the primary rRNA binding proteins, it binds directly to 16S rRNA central domain where it helps coordinate assembly of the platform of the 30S subunit. This is Small ribosomal subunit protein uS8 from Rhodospirillum rubrum (strain ATCC 11170 / ATH 1.1.1 / DSM 467 / LMG 4362 / NCIMB 8255 / S1).